The chain runs to 145 residues: Mite group 2 allergen Eur m 2 (145 aa).

An N-terminal signal peptide occupies residues 1–16 (MYKILCLSLLVAAVAA). 3 cysteine pairs are disulfide-bonded: C24-C135, C37-C43, and C89-C94.

Belongs to the NPC2 family.

The protein resides in the secreted. This chain is Mite group 2 allergen Eur m 2 (EURM2), found in Euroglyphus maynei (Mayne's house dust mite).